We begin with the raw amino-acid sequence, 151 residues long: Globin CTT-VIII (151 aa).

The 145-residue stretch at P4–E148 folds into the Globin domain. The heme b site is built by H62 and H97.

Belongs to the globin family. As to quaternary structure, homodimer.

In Chironomus thummi thummi (Midge), this protein is Globin CTT-VIII (CTT-8).